The chain runs to 611 residues: Phosphomethylpyrimidine synthase (611 aa).

Residues asparagine 218, methionine 247, tyrosine 276, histidine 312, 332 to 334, 373 to 376, and glutamate 412 contribute to the substrate site; these read SRG and DGLR. Residue histidine 416 participates in Zn(2+) binding. Tyrosine 439 is a substrate binding site. Histidine 480 serves as a coordination point for Zn(2+). The [4Fe-4S] cluster site is built by cysteine 560, cysteine 563, and cysteine 568.

Belongs to the ThiC family. As to quaternary structure, homodimer. [4Fe-4S] cluster serves as cofactor.

It catalyses the reaction 5-amino-1-(5-phospho-beta-D-ribosyl)imidazole + S-adenosyl-L-methionine = 4-amino-2-methyl-5-(phosphooxymethyl)pyrimidine + CO + 5'-deoxyadenosine + formate + L-methionine + 3 H(+). Its pathway is cofactor biosynthesis; thiamine diphosphate biosynthesis. In terms of biological role, catalyzes the synthesis of the hydroxymethylpyrimidine phosphate (HMP-P) moiety of thiamine from aminoimidazole ribotide (AIR) in a radical S-adenosyl-L-methionine (SAM)-dependent reaction. This Caulobacter sp. (strain K31) protein is Phosphomethylpyrimidine synthase.